The following is a 223-amino-acid chain: Small heat shock protein hspI, mitochondrial (223 aa).

A mitochondrion-targeting transit peptide spans 1-23 (MYKLSKTTPFFFRRAFLCGRRGG). Residues 109-223 (KTRGFRSPKT…YVKSTTINVQ (115 aa)) enclose the sHSP domain.

The protein belongs to the small heat shock protein (HSP20) family.

It is found in the mitochondrion. This chain is Small heat shock protein hspI, mitochondrial (hspI), found in Dictyostelium discoideum (Social amoeba).